We begin with the raw amino-acid sequence, 417 residues long: Serine--tRNA ligase (417 aa).

L-serine is bound at residue 232–234 (TAE). Residues 263–265 (RRE) and V279 each bind ATP. Residue E286 coordinates L-serine. 350–353 (EISS) is an ATP binding site. S385 is a binding site for L-serine.

The protein belongs to the class-II aminoacyl-tRNA synthetase family. Type-1 seryl-tRNA synthetase subfamily. As to quaternary structure, homodimer. The tRNA molecule binds across the dimer.

The protein resides in the cytoplasm. It catalyses the reaction tRNA(Ser) + L-serine + ATP = L-seryl-tRNA(Ser) + AMP + diphosphate + H(+). The catalysed reaction is tRNA(Sec) + L-serine + ATP = L-seryl-tRNA(Sec) + AMP + diphosphate + H(+). The protein operates within aminoacyl-tRNA biosynthesis; selenocysteinyl-tRNA(Sec) biosynthesis; L-seryl-tRNA(Sec) from L-serine and tRNA(Sec): step 1/1. Its function is as follows. Catalyzes the attachment of serine to tRNA(Ser). Is also able to aminoacylate tRNA(Sec) with serine, to form the misacylated tRNA L-seryl-tRNA(Sec), which will be further converted into selenocysteinyl-tRNA(Sec). The polypeptide is Serine--tRNA ligase (Leptospira borgpetersenii serovar Hardjo-bovis (strain JB197)).